The chain runs to 505 residues: ATP synthase subunit alpha, chloroplastic (505 aa).

Residue 170-177 (GDRQTGKT) participates in ATP binding.

It belongs to the ATPase alpha/beta chains family. As to quaternary structure, F-type ATPases have 2 components, CF(1) - the catalytic core - and CF(0) - the membrane proton channel. CF(1) has five subunits: alpha(3), beta(3), gamma(1), delta(1), epsilon(1). CF(0) has four main subunits: a, b, b' and c.

It is found in the plastid. The protein resides in the chloroplast thylakoid membrane. It carries out the reaction ATP + H2O + 4 H(+)(in) = ADP + phosphate + 5 H(+)(out). Produces ATP from ADP in the presence of a proton gradient across the membrane. The alpha chain is a regulatory subunit. This chain is ATP synthase subunit alpha, chloroplastic, found in Oenothera biennis (German evening primrose).